Here is a 194-residue protein sequence, read N- to C-terminus: Holliday junction branch migration complex subunit RuvA (194 aa).

The segment at 1–63 (MFEYMKGMIV…EDEAHLYGFV (63 aa)) is domain I. The tract at residues 64–142 (DKEELAMFKK…DSQVEYDQNF (79 aa)) is domain II. Residues 143–146 (FNHE) form a flexible linker region. The interval 146-194 (ENKNNNEVVDALMALGYTKHEGEQAASAVRDTSLSTEEMIRKALNWLAR) is domain III.

It belongs to the RuvA family. In terms of assembly, homotetramer. Forms an RuvA(8)-RuvB(12)-Holliday junction (HJ) complex. HJ DNA is sandwiched between 2 RuvA tetramers; dsDNA enters through RuvA and exits via RuvB. An RuvB hexamer assembles on each DNA strand where it exits the tetramer. Each RuvB hexamer is contacted by two RuvA subunits (via domain III) on 2 adjacent RuvB subunits; this complex drives branch migration. In the full resolvosome a probable DNA-RuvA(4)-RuvB(12)-RuvC(2) complex forms which resolves the HJ.

The protein resides in the cytoplasm. Its function is as follows. The RuvA-RuvB-RuvC complex processes Holliday junction (HJ) DNA during genetic recombination and DNA repair, while the RuvA-RuvB complex plays an important role in the rescue of blocked DNA replication forks via replication fork reversal (RFR). RuvA specifically binds to HJ cruciform DNA, conferring on it an open structure. The RuvB hexamer acts as an ATP-dependent pump, pulling dsDNA into and through the RuvAB complex. HJ branch migration allows RuvC to scan DNA until it finds its consensus sequence, where it cleaves and resolves the cruciform DNA. In Alkaliphilus metalliredigens (strain QYMF), this protein is Holliday junction branch migration complex subunit RuvA.